The primary structure comprises 426 residues: Glutamate-1-semialdehyde 2,1-aminomutase (426 aa).

Lysine 265 carries the N6-(pyridoxal phosphate)lysine modification.

It belongs to the class-III pyridoxal-phosphate-dependent aminotransferase family. HemL subfamily. In terms of assembly, homodimer. The cofactor is pyridoxal 5'-phosphate.

It localises to the cytoplasm. The enzyme catalyses (S)-4-amino-5-oxopentanoate = 5-aminolevulinate. The protein operates within porphyrin-containing compound metabolism; protoporphyrin-IX biosynthesis; 5-aminolevulinate from L-glutamyl-tRNA(Glu): step 2/2. In Escherichia coli O9:H4 (strain HS), this protein is Glutamate-1-semialdehyde 2,1-aminomutase.